Here is a 356-residue protein sequence, read N- to C-terminus: Tetraacyldisaccharide 4'-kinase (356 aa).

67-74 (FVGGTGKT) contacts ATP.

This sequence belongs to the LpxK family.

It catalyses the reaction a lipid A disaccharide + ATP = a lipid IVA + ADP + H(+). Its pathway is glycolipid biosynthesis; lipid IV(A) biosynthesis; lipid IV(A) from (3R)-3-hydroxytetradecanoyl-[acyl-carrier-protein] and UDP-N-acetyl-alpha-D-glucosamine: step 6/6. Its function is as follows. Transfers the gamma-phosphate of ATP to the 4'-position of a tetraacyldisaccharide 1-phosphate intermediate (termed DS-1-P) to form tetraacyldisaccharide 1,4'-bis-phosphate (lipid IVA). This is Tetraacyldisaccharide 4'-kinase from Herminiimonas arsenicoxydans.